Reading from the N-terminus, the 598-residue chain is Elongation factor 4 (598 aa).

Positions 4-186 (INIRNFAIIA…AIVSRLPAPS (183 aa)) constitute a tr-type G domain. Residues 16-21 (DHGKST) and 133-136 (NKID) contribute to the GTP site.

The protein belongs to the TRAFAC class translation factor GTPase superfamily. Classic translation factor GTPase family. LepA subfamily.

It localises to the cell inner membrane. It carries out the reaction GTP + H2O = GDP + phosphate + H(+). Functionally, required for accurate and efficient protein synthesis under certain stress conditions. May act as a fidelity factor of the translation reaction, by catalyzing a one-codon backward translocation of tRNAs on improperly translocated ribosomes. Back-translocation proceeds from a post-translocation (POST) complex to a pre-translocation (PRE) complex, thus giving elongation factor G a second chance to translocate the tRNAs correctly. Binds to ribosomes in a GTP-dependent manner. In Ehrlichia ruminantium (strain Gardel), this protein is Elongation factor 4.